Here is a 478-residue protein sequence, read N- to C-terminus: uncharacterized protein (478 aa).

An N-terminal signal peptide occupies residues 1–19 (MKLFPLCLSALVMSTATCA). Residues 20-214 (SSVEGAIEKV…VPVTLKLQRQ (195 aa)) lie on the Lumenal side of the membrane. A helical transmembrane segment spans residues 215 to 235 (IFLSFSIVYGLISLWWAIRCI). The Cytoplasmic portion of the chain corresponds to 236–240 (CSRTK). A helical membrane pass occupies residues 241-261 (LHLVQVCLFCWFSFFILNHPV). Topologically, residues 262–289 (KQRIFSIDNPDEYLVPFVVSCFTYFLGD) are lumenal. Residues 290–310 (GIEYALYSLFITTTVLGFGTI) traverse the membrane as a helical segment. The Cytoplasmic portion of the chain corresponds to 311-317 (RRTSKKM). Residues 318 to 338 (VLFFSLLTCGQAFLVNVAPMV) form a helical membrane-spanning segment. Topologically, residues 339–356 (YPLLYISGSDKACVLRMV) are lumenal. A helical membrane pass occupies residues 357-377 (WVFNKFLYLPLITFLGAVLAF). Residues 378–391 (RFRLKKASQFDTRW) are Cytoplasmic-facing. A helical membrane pass occupies residues 392–412 (NLFALTLAIIILFAFNDLVIF). Over 413–427 (DKLQKLWKYDDTTLE) the chain is Lumenal. Residues 428-448 (YLKIVNGGIKFVAFSILLGPY) traverse the membrane as a helical segment. The Cytoplasmic portion of the chain corresponds to 449–478 (SKLFAEPKSLQLDDFLGKHDGHKDPSLEKF).

The protein resides in the endoplasmic reticulum membrane. It is found in the golgi apparatus membrane. This is an uncharacterized protein from Schizosaccharomyces pombe (strain 972 / ATCC 24843) (Fission yeast).